The chain runs to 398 residues: Putative isocitrate lyase subunit B (398 aa).

It belongs to the isocitrate lyase/PEP mutase superfamily. Isocitrate lyase family. The cofactor is Mg(2+).

It catalyses the reaction D-threo-isocitrate = glyoxylate + succinate. Its function is as follows. Together with AceAa, they could catalyze the formation of succinate and glyoxylate from isocitrate. This chain is Putative isocitrate lyase subunit B (aceAb), found in Mycobacterium tuberculosis (strain ATCC 25618 / H37Rv).